We begin with the raw amino-acid sequence, 173 residues long: uncharacterized protein (173 aa).

This is an uncharacterized protein from Saccharomyces cerevisiae (strain ATCC 204508 / S288c) (Baker's yeast).